A 279-amino-acid polypeptide reads, in one-letter code: Orotidine 5'-phosphate decarboxylase (279 aa).

Substrate is bound by residues Asp8, Lys30, 58 to 67 (DLKFHDIPNT), Thr117, Arg177, Gln186, Gly206, and Arg207. Catalysis depends on Lys60, which acts as the Proton donor.

This sequence belongs to the OMP decarboxylase family. Type 1 subfamily. As to quaternary structure, homodimer.

It catalyses the reaction orotidine 5'-phosphate + H(+) = UMP + CO2. It participates in pyrimidine metabolism; UMP biosynthesis via de novo pathway; UMP from orotate: step 2/2. Catalyzes the decarboxylation of orotidine 5'-monophosphate (OMP) to uridine 5'-monophosphate (UMP). This is Orotidine 5'-phosphate decarboxylase from Campylobacter jejuni subsp. jejuni serotype O:2 (strain ATCC 700819 / NCTC 11168).